Here is a 544-residue protein sequence, read N- to C-terminus: Chaperonin GroEL (544 aa).

ATP contacts are provided by residues 29 to 32, 86 to 90, Gly413, 476 to 478, and Asp492; these read TLGP, DGTTT, and NAA.

It belongs to the chaperonin (HSP60) family. In terms of assembly, forms a cylinder of 14 subunits composed of two heptameric rings stacked back-to-back. Interacts with the co-chaperonin GroES.

It localises to the cytoplasm. The protein resides in the secreted. The catalysed reaction is ATP + H2O + a folded polypeptide = ADP + phosphate + an unfolded polypeptide.. Its function is as follows. Together with its co-chaperonin GroES, plays an essential role in assisting protein folding. The GroEL-GroES system forms a nano-cage that allows encapsulation of the non-native substrate proteins and provides a physical environment optimized to promote and accelerate protein folding. This Bacillus subtilis (strain 168) protein is Chaperonin GroEL.